Reading from the N-terminus, the 101-residue chain is MAKLSLIERENKRAKTVEKYAVKRAELKAIIADQSRSDEERYEARLKLQALPRNASPIRQRNRCSLTGRPRGTFRKFGLARSKIREIAFRGEIPGLTKASW.

This sequence belongs to the universal ribosomal protein uS14 family. As to quaternary structure, part of the 30S ribosomal subunit. Contacts proteins S3 and S10.

In terms of biological role, binds 16S rRNA, required for the assembly of 30S particles and may also be responsible for determining the conformation of the 16S rRNA at the A site. This Polynucleobacter asymbioticus (strain DSM 18221 / CIP 109841 / QLW-P1DMWA-1) (Polynucleobacter necessarius subsp. asymbioticus) protein is Small ribosomal subunit protein uS14.